The primary structure comprises 429 residues: Ribosomal RNA small subunit methyltransferase B (429 aa).

Residues 254 to 260 (CAAPGGK), Asp-277, Asp-303, and Asp-322 each bind S-adenosyl-L-methionine. The active-site Nucleophile is the Cys-375. Residues 397-419 (ALSETGTPDQPGQQNLPGGEEGD) are disordered. Positions 400-412 (ETGTPDQPGQQNL) are enriched in polar residues.

The protein belongs to the class I-like SAM-binding methyltransferase superfamily. RsmB/NOP family.

The protein resides in the cytoplasm. It catalyses the reaction cytidine(967) in 16S rRNA + S-adenosyl-L-methionine = 5-methylcytidine(967) in 16S rRNA + S-adenosyl-L-homocysteine + H(+). Functionally, specifically methylates the cytosine at position 967 (m5C967) of 16S rRNA. The chain is Ribosomal RNA small subunit methyltransferase B from Salmonella heidelberg (strain SL476).